Consider the following 365-residue polypeptide: Phosphate acyltransferase (365 aa).

This sequence belongs to the PlsX family. Homodimer. Probably interacts with PlsY.

It localises to the cytoplasm. It catalyses the reaction a fatty acyl-[ACP] + phosphate = an acyl phosphate + holo-[ACP]. The protein operates within lipid metabolism; phospholipid metabolism. Catalyzes the reversible formation of acyl-phosphate (acyl-PO(4)) from acyl-[acyl-carrier-protein] (acyl-ACP). This enzyme utilizes acyl-ACP as fatty acyl donor, but not acyl-CoA. This chain is Phosphate acyltransferase, found in Picosynechococcus sp. (strain ATCC 27264 / PCC 7002 / PR-6) (Agmenellum quadruplicatum).